Reading from the N-terminus, the 213-residue chain is Large ribosomal subunit protein uL3 (213 aa).

The protein belongs to the universal ribosomal protein uL3 family. Part of the 50S ribosomal subunit. Forms a cluster with proteins L14 and L19.

Functionally, one of the primary rRNA binding proteins, it binds directly near the 3'-end of the 23S rRNA, where it nucleates assembly of the 50S subunit. The sequence is that of Large ribosomal subunit protein uL3 from Bifidobacterium adolescentis (strain ATCC 15703 / DSM 20083 / NCTC 11814 / E194a).